The following is a 31-amino-acid chain: Cytochrome b6-f complex subunit 6 (31 aa).

A helical membrane pass occupies residues 3 to 23 (ALIGYILLMTLMFSLAAGLYF).

It belongs to the PetL family. In terms of assembly, the 4 large subunits of the cytochrome b6-f complex are cytochrome b6, subunit IV (17 kDa polypeptide, PetD), cytochrome f and the Rieske protein, while the 4 small subunits are PetG, PetL, PetM and PetN. The complex functions as a dimer.

Its subcellular location is the plastid. It is found in the chloroplast thylakoid membrane. Component of the cytochrome b6-f complex, which mediates electron transfer between photosystem II (PSII) and photosystem I (PSI), cyclic electron flow around PSI, and state transitions. PetL is important for photoautotrophic growth as well as for electron transfer efficiency and stability of the cytochrome b6-f complex. The sequence is that of Cytochrome b6-f complex subunit 6 from Emiliania huxleyi (Coccolithophore).